The following is a 470-amino-acid chain: Cell division protein FtsP (470 aa).

The segment at residues 1 to 27 (MSLSRRQFIQASGIALCAGAVPLKASA) is a signal peptide (tat-type signal). A Plastocyanin-like domain is found at 68–164 (WGINGRYLGP…NGLAGMWLVE (97 aa)).

It belongs to the FtsP family. In terms of processing, exported by the Tat system. The position of the signal peptide cleavage has been experimentally proven. Can also be exported by the Sec system.

It is found in the periplasm. Cell division protein that is required for growth during stress conditions. May be involved in protecting or stabilizing the divisomal assembly under conditions of stress. The protein is Cell division protein FtsP of Escherichia coli (strain K12).